Consider the following 248-residue polypeptide: MNQTNFGFKKVDYTKKQGLVNNVFSNVADKYDLMNDLMSLGLHRLWKDEFIRQIPNLNSHILDVASGSGDIALKLAKKARDRVNNISLTLSDINEEMLKQAKKKAIDLNLFQNLKFTVASAEELPFPDDSFDYYTIAFGIRNVPDINKALKEACRVLKPMGKFICLEFSKVKEGYIKDFYKFYSFNIIPSIGQMIAGNKEAYEYLVESIDLFPSQDEFRIMIKDAGFEEVGYKNLSGGIVAIHSAYTQ.

The S-adenosyl-L-methionine site is built by Ser68 and Asp92.

Belongs to the class I-like SAM-binding methyltransferase superfamily. MenG/UbiE family.

The enzyme catalyses a 2-demethylmenaquinol + S-adenosyl-L-methionine = a menaquinol + S-adenosyl-L-homocysteine + H(+). It carries out the reaction a 2-methoxy-6-(all-trans-polyprenyl)benzene-1,4-diol + S-adenosyl-L-methionine = a 5-methoxy-2-methyl-3-(all-trans-polyprenyl)benzene-1,4-diol + S-adenosyl-L-homocysteine + H(+). The protein operates within quinol/quinone metabolism; menaquinone biosynthesis; menaquinol from 1,4-dihydroxy-2-naphthoate: step 2/2. Its pathway is cofactor biosynthesis; ubiquinone biosynthesis. Functionally, methyltransferase required for the conversion of demethylmenaquinol (DMKH2) to menaquinol (MKH2) and the conversion of 2-polyprenyl-6-methoxy-1,4-benzoquinol (DDMQH2) to 2-polyprenyl-3-methyl-6-methoxy-1,4-benzoquinol (DMQH2). The polypeptide is Ubiquinone/menaquinone biosynthesis C-methyltransferase UbiE (Rickettsia africae (strain ESF-5)).